Consider the following 700-residue polypeptide: Centrosomal protein of 63 kDa (700 aa).

At methionine 1 the chain carries N-acetylmethionine. Coiled coils occupy residues lysine 73–isoleucine 283 and leucine 343–lysine 533. Phosphoserine occurs at positions 278, 488, and 492. Residues glutamine 570–glycine 603 form a disordered region. Positions proline 593–glycine 603 are enriched in low complexity.

It belongs to the CEP63 family. As to quaternary structure, interacts with CEP152 and CDK1; these interactions recruit both ligands to centrosomes. Interacts with CDK2, CDK5RAP2, WDR62, CEP90, KIAA0753/moonraker and CCDC14. CEP63, CDK5RAP2, CEP152, WDR62 are proposed to form a stepwise assembled complex at the centrosome forming a ring near parental centrioles. Interacts with CCDC57; the interaction is required for their location to proximal end of centrioles. Interacts with FXR1; promoting its stabilization. Polyubiquitinated via 'Lys-48'-linked ubiquitin, leading to its degradation. Deubiquitinated by USP36, promoting its stabilization.

It localises to the cytoplasm. The protein resides in the cytoskeleton. Its subcellular location is the microtubule organizing center. The protein localises to the centrosome. It is found in the centriole. It localises to the centriolar satellite. In terms of biological role, required for normal spindle assembly. Plays a key role in mother-centriole-dependent centriole duplication; the function also seems to involve CEP152, CDK5RAP2 and WDR62 through a stepwise assembled complex at the centrosome that recruits CDK2 required for centriole duplication. Reported to be required for centrosomal recruitment of CEP152; however, this function has been questioned. Also recruits CDK1 to centrosomes. Plays a role in DNA damage response. Following DNA damage, such as double-strand breaks (DSBs), is removed from centrosomes; this leads to the inactivation of spindle assembly and delay in mitotic progression. Promotes stabilization of FXR1 protein by inhibiting FXR1 ubiquitination. The protein is Centrosomal protein of 63 kDa of Mus musculus (Mouse).